A 47-amino-acid chain; its full sequence is Large ribosomal subunit protein bL34 (47 aa).

Residues 1-28 form a disordered region; the sequence is MAKGKRTFQPNNRRRARVHGFRTRMRTR.

Belongs to the bacterial ribosomal protein bL34 family.

The polypeptide is Large ribosomal subunit protein bL34 (Corynebacterium efficiens (strain DSM 44549 / YS-314 / AJ 12310 / JCM 11189 / NBRC 100395)).